Consider the following 145-residue polypeptide: UPF0763 protein CFF8240_1572 (145 aa).

It belongs to the UPF0763 family.

This is UPF0763 protein CFF8240_1572 from Campylobacter fetus subsp. fetus (strain 82-40).